The sequence spans 64 residues: Alpha-conotoxin-like Lt1.3 (64 aa).

Positions 1–21 are cleaved as a signal peptide; it reads MGMRMMFTMFLLVVLTTTVVS. The propeptide occupies 22-45; it reads FNLDRESNHENRRTSNQITRGMWD. 2 cysteine pairs are disulfide-bonded: Cys-47-Cys-53 and Cys-48-Cys-61. The tract at residues 49 to 51 is lacks the Ser-Xaa-Pro motif that is crucial for potent interaction with nAChR; it reads DDP.

It belongs to the conotoxin A superfamily. As to expression, expressed by the venom duct.

The protein resides in the secreted. Functionally, alpha-conotoxins act on postsynaptic membranes, they bind to the nicotinic acetylcholine receptors (nAChR) and thus inhibit them. Has possibly a distinct nAChR binding mode from other alpha-conotoxins, due to a different three residue motif (lacks the Ser-Xaa-Pro motif). The sequence is that of Alpha-conotoxin-like Lt1.3 from Conus litteratus (Lettered cone).